The following is a 1106-amino-acid chain: Platelet-derived growth factor receptor beta (1106 aa).

Residues 1–32 (MRLPGAMPALALKGELLLLSLLLLLEPQISQG) form the signal peptide. 5 Ig-like C2-type domains span residues 33–120 (LVVT…YIFV), 129–210 (PNDA…YRLQ), 214–309 (INVS…INIT), 331–403 (HRSR…HEDA), and 416–524 (PVRV…VIVV). At 33-532 (LVVTPPGPEL…VVPHSLPFKV (500 aa)) the chain is on the extracellular side. Residues Asn-45, Asn-89, and Asn-103 are each glycosylated (N-linked (GlcNAc...) asparagine). A disulfide bridge links Cys-54 with Cys-100. Cys-149 and Cys-190 are disulfide-bonded. N-linked (GlcNAc...) asparagine glycosylation is found at Asn-215 and Asn-230. A disulfide bridge connects residues Cys-235 and Cys-291. Residues Asn-292, Asn-307, Asn-354, Asn-371, Asn-468, and Asn-479 are each glycosylated (N-linked (GlcNAc...) asparagine). Cys-436 and Cys-508 form a disulfide bridge. A helical transmembrane segment spans residues 533-553 (VVISAILALVVLTIISLIILI). Residues 554–1106 (MLWQKKPRYE…PRAEAEDSFL (553 aa)) lie on the Cytoplasmic side of the membrane. Residues Tyr-562, Tyr-579, and Tyr-581 each carry the phosphotyrosine; by autocatalysis modification. The region spanning 600–962 (LVLGRTLGSG…QLVLLLERLL (363 aa)) is the Protein kinase domain. ATP contacts are provided by residues 606 to 614 (LGSGAFGQV) and Lys-634. The residue at position 686 (Tyr-686) is a Phosphotyrosine; by ABL1 and ABL2. 7 positions are modified to phosphotyrosine; by autocatalysis: Tyr-716, Tyr-740, Tyr-751, Tyr-763, Tyr-771, Tyr-775, and Tyr-778. The active-site Proton acceptor is the Asp-826. Tyr-857 carries the phosphotyrosine; by autocatalysis modification. A phosphotyrosine; by ABL1 and ABL2 mark is found at Tyr-934 and Tyr-970. Residues Tyr-1009 and Tyr-1021 each carry the phosphotyrosine; by autocatalysis modification. Residues 1019–1106 (NDYIIPLPDP…PRAEAEDSFL (88 aa)) form a disordered region. Over residues 1043-1060 (SLASSTLNEVNTSSTISC) the composition is skewed to polar residues. The segment covering 1066 to 1088 (PQDEPEPEPQLELQVEPEPELEQ) has biased composition (acidic residues).

This sequence belongs to the protein kinase superfamily. Tyr protein kinase family. CSF-1/PDGF receptor subfamily. Interacts with homodimeric PDGFB and PDGFD, and with heterodimers formed by PDGFA and PDGFB. May also interact with homodimeric PDGFC. Monomer in the absence of bound ligand. Interaction with homodimeric PDGFB, heterodimers formed by PDGFA and PDGFB or homodimeric PDGFD, leads to receptor dimerization, where both PDGFRA homodimers and heterodimers with PDGFRB are observed. Interacts with SH2B2/APS. Interacts directly (tyrosine phosphorylated) with SHB. Interacts (tyrosine phosphorylated) with PIK3R1 and RASA1. Interacts (tyrosine phosphorylated) with CBL. Interacts (tyrosine phosphorylated) with SRC and SRC family kinases. Interacts (tyrosine phosphorylated) with PIK3C2B, maybe indirectly. Interacts (tyrosine phosphorylated) with SHC1, GRB7, GRB10 and NCK1. Interaction with GRB2 is mediated by SHC1. Interacts (via C-terminus) with NHERF1. In terms of processing, autophosphorylated on tyrosine residues upon ligand binding. Autophosphorylation occurs in trans, i.e. one subunit of the dimeric receptor phosphorylates tyrosine residues on the other subunit. Phosphorylation at Tyr-579, and to a lesser degree, at Tyr-581, is important for interaction with SRC family kinases. Phosphorylation at Tyr-740 and Tyr-751 is important for interaction with PIK3R1. Phosphorylation at Tyr-751 is important for interaction with NCK1. Phosphorylation at Tyr-771 and Tyr-857 is important for interaction with RASA1/GAP. Phosphorylation at Tyr-857 is important for efficient phosphorylation of PLCG1 and PTPN11, resulting in increased phosphorylation of AKT1, MAPK1/ERK2 and/or MAPK3/ERK1, PDCD6IP/ALIX and STAM, and in increased cell proliferation. Phosphorylation at Tyr-1009 is important for interaction with PTPN11. Phosphorylation at Tyr-1009 and Tyr-1021 is important for interaction with PLCG1. Phosphorylation at Tyr-1021 is important for interaction with CBL; PLCG1 and CBL compete for the same binding site. Dephosphorylated by PTPRJ at Tyr-751, Tyr-857, Tyr-1009 and Tyr-1021. Dephosphorylated by PTPN2 at Tyr-579 and Tyr-1021. N-glycosylated. Post-translationally, ubiquitinated. After autophosphorylation, the receptor is polyubiquitinated, leading to its degradation.

The protein resides in the cell membrane. It is found in the cytoplasmic vesicle. It localises to the lysosome lumen. The catalysed reaction is L-tyrosyl-[protein] + ATP = O-phospho-L-tyrosyl-[protein] + ADP + H(+). Its activity is regulated as follows. Present in an inactive conformation in the absence of bound ligand. Binding of PDGFB and/or PDGFD leads to dimerization and activation by autophosphorylation on tyrosine residues. Inhibited by imatinib. Functionally, tyrosine-protein kinase that acts as a cell-surface receptor for homodimeric PDGFB and PDGFD and for heterodimers formed by PDGFA and PDGFB, and plays an essential role in the regulation of embryonic development, cell proliferation, survival, differentiation, chemotaxis and migration. Plays an essential role in blood vessel development by promoting proliferation, migration and recruitment of pericytes and smooth muscle cells to endothelial cells. Plays a role in the migration of vascular smooth muscle cells and the formation of neointima at vascular injury sites. Required for normal development of the cardiovascular system. Required for normal recruitment of pericytes (mesangial cells) in the kidney glomerulus, and for normal formation of a branched network of capillaries in kidney glomeruli. Promotes rearrangement of the actin cytoskeleton and the formation of membrane ruffles. Binding of its cognate ligands - homodimeric PDGFB, heterodimers formed by PDGFA and PDGFB or homodimeric PDGFD -leads to the activation of several signaling cascades; the response depends on the nature of the bound ligand and is modulated by the formation of heterodimers between PDGFRA and PDGFRB. Phosphorylates PLCG1, PIK3R1, PTPN11, RASA1/GAP, CBL, SHC1 and NCK1. Activation of PLCG1 leads to the production of the cellular signaling molecules diacylglycerol and inositol 1,4,5-trisphosphate, mobilization of cytosolic Ca(2+) and the activation of protein kinase C. Phosphorylation of PIK3R1, the regulatory subunit of phosphatidylinositol 3-kinase, leads to the activation of the AKT1 signaling pathway. Phosphorylation of SHC1, or of the C-terminus of PTPN11, creates a binding site for GRB2, resulting in the activation of HRAS, RAF1 and down-stream MAP kinases, including MAPK1/ERK2 and/or MAPK3/ERK1. Promotes phosphorylation and activation of SRC family kinases. Promotes phosphorylation of PDCD6IP/ALIX and STAM. Receptor signaling is down-regulated by protein phosphatases that dephosphorylate the receptor and its down-stream effectors, and by rapid internalization of the activated receptor. In Homo sapiens (Human), this protein is Platelet-derived growth factor receptor beta (PDGFRB).